The primary structure comprises 544 residues: Peptide chain release factor 3 (544 aa).

One can recognise a tr-type G domain in the interval 17–286 (EKRRNFAIIS…SFLDYGLAPR (270 aa)). GTP-binding positions include 26–33 (SHPDAGKT), 94–98 (DTPGH), and 148–151 (NKMD).

The protein belongs to the TRAFAC class translation factor GTPase superfamily. Classic translation factor GTPase family. PrfC subfamily.

Its subcellular location is the cytoplasm. Its function is as follows. Increases the formation of ribosomal termination complexes and stimulates activities of RF-1 and RF-2. It binds guanine nucleotides and has strong preference for UGA stop codons. It may interact directly with the ribosome. The stimulation of RF-1 and RF-2 is significantly reduced by GTP and GDP, but not by GMP. The protein is Peptide chain release factor 3 of Microcystis aeruginosa (strain NIES-843 / IAM M-2473).